We begin with the raw amino-acid sequence, 369 residues long: Isopentenyl-diphosphate delta-isomerase (369 aa).

9 to 10 (RK) contacts substrate. Residues T65, 66-68 (GMT), S96, and N125 each bind FMN. 96 to 98 (SQR) provides a ligand contact to substrate. Q160 is a substrate binding site. E161 lines the Mg(2+) pocket. FMN contacts are provided by residues K193, S218, T223, 275–277 (GVR), and 296–297 (AL).

The protein belongs to the IPP isomerase type 2 family. As to quaternary structure, homooctamer. Dimer of tetramers. The cofactor is FMN. NADPH is required as a cofactor. It depends on Mg(2+) as a cofactor.

It localises to the cytoplasm. It carries out the reaction isopentenyl diphosphate = dimethylallyl diphosphate. Its function is as follows. Involved in the biosynthesis of isoprenoids. Catalyzes the 1,3-allylic rearrangement of the homoallylic substrate isopentenyl (IPP) to its allylic isomer, dimethylallyl diphosphate (DMAPP). The sequence is that of Isopentenyl-diphosphate delta-isomerase from Sulfurisphaera tokodaii (strain DSM 16993 / JCM 10545 / NBRC 100140 / 7) (Sulfolobus tokodaii).